Here is a 317-residue protein sequence, read N- to C-terminus: Cyclin-dependent kinase 1 (317 aa).

The Protein kinase domain occupies 7–292; that stretch reads YQRQEKVGEG…AKRALIHPYF (286 aa). ATP is bound by residues 13–21 and lysine 37; that span reads VGEGTYGVV. A Phosphothreonine modification is found at threonine 17. Tyrosine 18 is subject to Phosphotyrosine; by SWE1. The Proton acceptor role is filled by aspartate 133. Threonine 166 carries the phosphothreonine; by CAK modification. A disordered region spans residues 296-317; that stretch reads DDRDHNNYNEDNIGIDKHQNMQ.

This sequence belongs to the protein kinase superfamily. CMGC Ser/Thr protein kinase family. CDC2/CDKX subfamily. As to quaternary structure, forms several complexes with cyclins CCN1, CLB2, CLN3, and HGC1. The CDC28-CCN1 complex associates with septin CDC11 upon hyphal induction. Interacts with IQG1, RFA2, and HSP90. In terms of processing, phosphorylated at Tyr-18 by SWE1 in a cell cycle-dependent manner. Yeast-form and hyphal cells display similar dynamics of phosphorylation and dephosphorylation of Tyr-18. Tyr-18 phosphorylation leads to inhibition of CDC28 kinase activity.

It carries out the reaction L-seryl-[protein] + ATP = O-phospho-L-seryl-[protein] + ADP + H(+). The enzyme catalyses L-threonyl-[protein] + ATP = O-phospho-L-threonyl-[protein] + ADP + H(+). With respect to regulation, phosphorylation at Thr-17 or Tyr-18 inactivates the enzyme, while phosphorylation at Thr-166 activates it. In terms of biological role, cyclin-dependent kinase that acts as a master regulator of the mitotic and meiotic cell cycles. May drive the G1-S transition. Plays a role in mitotic exit. Plays a role in the expression of morphology-related transcription factors, and especially hyphae-specific genes. Binds distinct cyclin subunits as cells progress through the division cycle or flamentous growth. The CDC28-CLB2 complex regulates cytokinesis partly by phosphorylating the actomyosin ring component IQG1. The CDC28-CLN3 complex phosphorylates SLA1 which regulates cortical actin patch dynamics. The CDC28-CCN1 complex phosphorylates CDC11 and SEC2 upon induction of filamentous growth. The CDC28-HGC1 complex also phosphorylates SEC2 and maintains CDC11 phosphorylation throughout hyphal growth. Moreover, the CDC28-HGC1 complex phosphorylates and prevents RGA2 from localizing to hyphal tips, leading to localized CDC42 activation for hyphal extension. CDC28-HGC1 phosphorylation of EFG1 represses cell separation genes during hyphal growth. Additional substrates for CDC28 are RFA2 in G1-phase; MOB2, which is required for the maintenance of polarisome components and for inhibition of cell separation in hyphae; and GIN4 to regulate its association to SEP7 and subsequent septin ring assembly. The chain is Cyclin-dependent kinase 1 from Candida albicans (strain SC5314 / ATCC MYA-2876) (Yeast).